The primary structure comprises 297 residues: MNLGTLVSETRNPQTMDLDALPTPELVKRFNEQDTRVAEAVKATLPDVARAVDAAVAALKSGGRIIYMGAGTSGRLGVLDASECPPTFGVPHGLVVGLIAGGPGALLKAVEGAEDSQQAGEDDLVALNLQEQDLVVGLAASGRTPYVIGGLRYARQSGCTTVAVSCNPDSPIAREANIAISPVVGPEALTGSTRLKSGTAQKMVLNMISTGAMVKFGKVYQNLMVDMKATNVKLVDRACRMVVEATGIGREEAETLLKQTDFEVKPAILMALTGLDAAAAREKLAAHQGFLRAALEH.

Residues 55-218 enclose the SIS domain; that stretch reads AVAALKSGGR…STGAMVKFGK (164 aa). Glu-83 serves as the catalytic Proton donor. The active site involves Glu-114.

Belongs to the GCKR-like family. MurNAc-6-P etherase subfamily. In terms of assembly, homodimer.

The enzyme catalyses N-acetyl-D-muramate 6-phosphate + H2O = N-acetyl-D-glucosamine 6-phosphate + (R)-lactate. It participates in amino-sugar metabolism; 1,6-anhydro-N-acetylmuramate degradation. It functions in the pathway amino-sugar metabolism; N-acetylmuramate degradation. The protein operates within cell wall biogenesis; peptidoglycan recycling. In terms of biological role, specifically catalyzes the cleavage of the D-lactyl ether substituent of MurNAc 6-phosphate, producing GlcNAc 6-phosphate and D-lactate. Together with AnmK, is also required for the utilization of anhydro-N-acetylmuramic acid (anhMurNAc) either imported from the medium or derived from its own cell wall murein, and thus plays a role in cell wall recycling. This Salmonella dublin (strain CT_02021853) protein is N-acetylmuramic acid 6-phosphate etherase.